Here is a 903-residue protein sequence, read N- to C-terminus: Immunoglobulin superfamily member 22 (903 aa).

Ig-like domains lie at 67–158 (PEFV…LLVT), 232–322 (EAIR…AELT), 418–508 (PIKF…AIVT), and 606–696 (PSVL…LHLS). 2 consecutive Fibronectin type-III domains span residues 703-798 (FASQ…AKDP) and 804-898 (LVQD…MPPP).

The polypeptide is Immunoglobulin superfamily member 22 (IGSF22) (Homo sapiens (Human)).